Consider the following 216-residue polypeptide: Uracil phosphoribosyltransferase (216 aa).

5-phospho-alpha-D-ribose 1-diphosphate-binding positions include Arg84, Arg109, and 137–145 (DPMLATGGS). Residues Ile202 and 207-209 (GDA) each bind uracil. Asp208 provides a ligand contact to 5-phospho-alpha-D-ribose 1-diphosphate.

Belongs to the UPRTase family. The cofactor is Mg(2+).

It catalyses the reaction UMP + diphosphate = 5-phospho-alpha-D-ribose 1-diphosphate + uracil. The protein operates within pyrimidine metabolism; UMP biosynthesis via salvage pathway; UMP from uracil: step 1/1. Allosterically activated by GTP. Catalyzes the conversion of uracil and 5-phospho-alpha-D-ribose 1-diphosphate (PRPP) to UMP and diphosphate. The sequence is that of Uracil phosphoribosyltransferase from Nostoc sp. (strain PCC 7120 / SAG 25.82 / UTEX 2576).